Consider the following 305-residue polypeptide: FMRFamide-related peptides type HF-4 (305 aa).

Residues 1 to 19 form the signal peptide; it reads MTSLCLTIAPAVLSLICLS. Phenylalanine 36, phenylalanine 47, and phenylalanine 66 each carry phenylalanine amide. Isoleucine 75 bears the Isoleucine amide mark. A phenylalanine amide mark is found at phenylalanine 84 and phenylalanine 93. At isoleucine 102 the chain carries Isoleucine amide. Phenylalanine amide is present on residues phenylalanine 111, phenylalanine 120, phenylalanine 129, phenylalanine 138, phenylalanine 147, phenylalanine 156, and phenylalanine 165. The propeptide occupies 168–305; sequence SVDGEIEAGV…EHKQEYMRFG (138 aa).

It belongs to the FARP (FMRFamide related peptide) family. In terms of tissue distribution, central nervous system.

Its subcellular location is the secreted. Functionally, can function as both cardioregulatory hormones and transmitters and may regulate cardiovascular function. The protein is FMRFamide-related peptides type HF-4 of Cornu aspersum (Brown garden snail).